A 192-amino-acid polypeptide reads, in one-letter code: Ion-translocating oxidoreductase complex subunit A (192 aa).

The next 6 helical transmembrane spans lie at 5 to 25 (ILLI…FLGL), 39 to 59 (IGMS…AYLI), 63 to 83 (ILTP…VIAV), 102 to 122 (LLGI…VALL), 134 to 154 (VIYG…FAAL), and 171 to 191 (SIAL…TGLV).

Belongs to the NqrDE/RnfAE family. The complex is composed of six subunits: RnfA, RnfB, RnfC, RnfD, RnfE and RnfG.

The protein resides in the cell inner membrane. Functionally, part of a membrane-bound complex that couples electron transfer with translocation of ions across the membrane. This chain is Ion-translocating oxidoreductase complex subunit A, found in Pasteurella multocida (strain Pm70).